We begin with the raw amino-acid sequence, 247 residues long: ATP synthase subunit a, chloroplastic (247 aa).

The next 5 helical transmembrane spans lie at 38–58 (QVLI…LIAV), 95–115 (VPFI…GALL), 134–154 (INTT…AGLS), 199–219 (LVVV…VMFL), and 220–240 (GLFT…AYIG).

The protein belongs to the ATPase A chain family. In terms of assembly, F-type ATPases have 2 components, CF(1) - the catalytic core - and CF(0) - the membrane proton channel. CF(1) has five subunits: alpha(3), beta(3), gamma(1), delta(1), epsilon(1). CF(0) has four main subunits: a, b, b' and c.

It localises to the plastid. The protein resides in the chloroplast thylakoid membrane. Key component of the proton channel; it plays a direct role in the translocation of protons across the membrane. The protein is ATP synthase subunit a, chloroplastic of Brachypodium distachyon (Purple false brome).